Consider the following 226-residue polypeptide: Probable proteasome subunit beta type-1 (226 aa).

A propeptide spans 1 to 24 (MATTVKDTMNVDINAIKKGEIRMG) (removed in mature form). Thr25 serves as the catalytic Nucleophile.

The protein belongs to the peptidase T1B family. In terms of assembly, the 26S proteasome consists of a 20S proteasome core and two 19S regulatory subunits. The 20S proteasome core is composed of 28 subunits that are arranged in four stacked rings, resulting in a barrel-shaped structure. The two end rings are each formed by seven alpha subunits, and the two central rings are each formed by seven beta subunits. The catalytic chamber with the active sites is on the inside of the barrel.

The protein localises to the cytoplasm. It localises to the nucleus. The catalysed reaction is Cleavage of peptide bonds with very broad specificity.. In terms of biological role, the proteasome is a multicatalytic proteinase complex which is characterized by its ability to cleave peptides with Arg, Phe, Tyr, Leu, and Glu adjacent to the leaving group at neutral or slightly basic pH. The proteasome has an ATP-dependent proteolytic activity. In Schizosaccharomyces pombe (strain 972 / ATCC 24843) (Fission yeast), this protein is Probable proteasome subunit beta type-1 (pre3).